The following is a 185-amino-acid chain: Ribosome-recycling factor (185 aa).

It belongs to the RRF family.

It is found in the cytoplasm. Its function is as follows. Responsible for the release of ribosomes from messenger RNA at the termination of protein biosynthesis. May increase the efficiency of translation by recycling ribosomes from one round of translation to another. The sequence is that of Ribosome-recycling factor from Bacillus pumilus (strain SAFR-032).